A 221-amino-acid polypeptide reads, in one-letter code: Flagellar L-ring protein 1 (221 aa).

The N-terminal stretch at 1 to 16 (MKRFLILTPMVLALCG) is a signal peptide. A lipid anchor (N-palmitoyl cysteine) is attached at Cys-17. Cys-17 carries the S-diacylglycerol cysteine lipid modification.

This sequence belongs to the FlgH family. The basal body constitutes a major portion of the flagellar organelle and consists of four rings (L,P,S, and M) mounted on a central rod.

The protein localises to the cell outer membrane. Its subcellular location is the bacterial flagellum basal body. In terms of biological role, assembles around the rod to form the L-ring and probably protects the motor/basal body from shearing forces during rotation. This is Flagellar L-ring protein 1 from Yersinia pestis.